The sequence spans 169 residues: MRVFKDAISGDEMFSDSHSPQLINDVVYEVDANFITVSNGLDSKLIAANPSGEEGQEEVSDSTERVIDLVHASRLVSTSFDKKSYRAYLKGYLKAIKERLQKENPERVSIFESRINEYMVNVFKNFDDYEHYIGESMNPDGMVALMNFRENGVTPYFVFLKDGLIEEKY.

The 169-residue stretch at 1–169 (MRVFKDAISG…LKDGLIEEKY (169 aa)) folds into the TCTP domain.

The protein belongs to the TCTP family.

It localises to the cytoplasm. Involved in calcium binding and microtubule stabilization. The sequence is that of Translationally-controlled tumor protein homolog (TCTP) from Schistosoma japonicum (Blood fluke).